Reading from the N-terminus, the 170-residue chain is MDFKQYIRVIPDFPQPGIRFKDITTLLKDGPAYKAAIQDLAVFAREVQADVIAGPEARGFVVGAPLSYEMGIGFVPIRKSGKLPYESIKANYDLEYGKDALAVHVDAIQPGQRVLIADDLLATGGTIETTINLIEQLGGKVVGAAFFIELSYLDGRSKIGEIPIKSLVQY.

This sequence belongs to the purine/pyrimidine phosphoribosyltransferase family. As to quaternary structure, homodimer.

The protein resides in the cytoplasm. The enzyme catalyses AMP + diphosphate = 5-phospho-alpha-D-ribose 1-diphosphate + adenine. Its pathway is purine metabolism; AMP biosynthesis via salvage pathway; AMP from adenine: step 1/1. Functionally, catalyzes a salvage reaction resulting in the formation of AMP, that is energically less costly than de novo synthesis. In Brevibacillus brevis (strain 47 / JCM 6285 / NBRC 100599), this protein is Adenine phosphoribosyltransferase.